Consider the following 218-residue polypeptide: Ribose-5-phosphate isomerase A (218 aa).

Substrate contacts are provided by residues 28–31, 81–84, and 94–97; these read TGST, DSAD, and KGKG. Glu-103 acts as the Proton acceptor in catalysis. Lys-121 is a binding site for substrate.

The protein belongs to the ribose 5-phosphate isomerase family. As to quaternary structure, homodimer.

The enzyme catalyses aldehydo-D-ribose 5-phosphate = D-ribulose 5-phosphate. Its pathway is carbohydrate degradation; pentose phosphate pathway; D-ribose 5-phosphate from D-ribulose 5-phosphate (non-oxidative stage): step 1/1. Functionally, catalyzes the reversible conversion of ribose-5-phosphate to ribulose 5-phosphate. This is Ribose-5-phosphate isomerase A from Blochmanniella pennsylvanica (strain BPEN).